A 95-amino-acid chain; its full sequence is MRTLALLAAILLVALQAQAEHVSVSIDEVVDQQPPQAEDQDVAIYVKEHESSALEALGVKAGVVCACRRALCLPRERRAGFCRIRGRIHPLCCRR.

The N-terminal stretch at 1-19 is a signal peptide; that stretch reads MRTLALLAAILLVALQAQA. A propeptide spanning residues 20–62 is cleaved from the precursor; the sequence is EHVSVSIDEVVDQQPPQAEDQDVAIYVKEHESSALEALGVKAG. Intrachain disulfides connect Cys-65/Cys-93, Cys-67/Cys-82, and Cys-72/Cys-92.

This sequence belongs to the alpha-defensin family.

It is found in the secreted. This peptide has antibiotic, anti-fungi and antiviral activity. It also inhibits corticotropin (ACTH) stimulated corticosterone production. In Oryctolagus cuniculus (Rabbit), this protein is Corticostatin-3.